We begin with the raw amino-acid sequence, 341 residues long: 4-hydroxy-2-oxovalerate aldolase (341 aa).

The 251-residue stretch at 9–259 (VRITEVCLRD…KLDIDLYKMM (251 aa)) folds into the Pyruvate carboxyltransferase domain. 17–18 (RD) is a substrate binding site. D18 contributes to the Mn(2+) binding site. H21 functions as the Proton acceptor in the catalytic mechanism. Residues S171 and H198 each coordinate substrate. 2 residues coordinate Mn(2+): H198 and H200. Y289 contacts substrate.

It belongs to the 4-hydroxy-2-oxovalerate aldolase family.

The enzyme catalyses (S)-4-hydroxy-2-oxopentanoate = acetaldehyde + pyruvate. In Bacillus thuringiensis (strain Al Hakam), this protein is 4-hydroxy-2-oxovalerate aldolase.